The sequence spans 335 residues: Homeobox protein DBX1 (335 aa).

2 disordered regions span residues 58-102 (IPAA…LSPA) and 240-335 (KERE…ITVS). Residues 83-95 (GSPGSGSRRGSSP) show a composition bias toward low complexity. Positions 181–240 (GMLRRAVFSDVQRKALEKTFQKQKYISKPDRKKLASKLGLKDSQVKIWFQNRRMKWRNSK) form a DNA-binding region, homeobox. The span at 299 to 317 (GPLPASPAHSSSPGKPSDF) shows a compositional bias: low complexity. Residues 318–335 (SDSDEDEEGEEDEEITVS) are compositionally biased toward acidic residues.

It belongs to the H2.0 homeobox family.

It localises to the nucleus. In terms of biological role, could have a role in patterning the central nervous system during embryogenesis. Has a key role in regulating the distinct phenotypic features that distinguish two major classes of ventral interneurons, V0 and V1 neurons. Regulates the transcription factor profile, neurotransmitter phenotype, intraspinal migratory path and axonal trajectory of V0 neurons, features that differentiate them from an adjacent set of V1 neurons. This chain is Homeobox protein DBX1 (Dbx1), found in Mus musculus (Mouse).